Here is an 818-residue protein sequence, read N- to C-terminus: Probable beta-glucosidase I (818 aa).

Asn176 carries N-linked (GlcNAc...) asparagine glycosylation. Asp204 is an active-site residue. Positions 374–534 (DGKPGFTFRV…SQEELISNAV (161 aa)) constitute a PA14 domain. 2 N-linked (GlcNAc...) asparagine glycosylation sites follow: Asn453 and Asn472.

The protein belongs to the glycosyl hydrolase 3 family.

It localises to the secreted. The enzyme catalyses Hydrolysis of terminal, non-reducing beta-D-glucosyl residues with release of beta-D-glucose.. It functions in the pathway glycan metabolism; cellulose degradation. Its function is as follows. Beta-glucosidases are one of a number of cellulolytic enzymes involved in the degradation of cellulosic biomass. Catalyzes the last step releasing glucose from the inhibitory cellobiose. This Aspergillus niger (strain ATCC MYA-4892 / CBS 513.88 / FGSC A1513) protein is Probable beta-glucosidase I (bglI).